We begin with the raw amino-acid sequence, 116 residues long: uncharacterized protein (116 aa).

Helical transmembrane passes span 5 to 27 (AILL…AVPC), 42 to 64 (PFVP…TAGV), and 88 to 110 (VLHG…VVAI).

The protein localises to the cell membrane. This is an uncharacterized protein from Archaeoglobus fulgidus (strain ATCC 49558 / DSM 4304 / JCM 9628 / NBRC 100126 / VC-16).